The chain runs to 347 residues: NADH-ubiquinone oxidoreductase chain 2 (347 aa).

The next 11 membrane-spanning stretches (helical) occupy residues 1-21 (MNPAIFTTIILTMILGTMIVT), 25-45 (HWLTVWIGFEMNMLAIIPILM), 59-79 (YFLTQATASMLLMLAITINLV), 96-116 (ITMTLAMAMKLGLSPFHFWVP), 127-147 (GLILLTWQKLAPMSILYQISP), 149-169 (INLELLLMMAILSIAIGGWGG), 178-198 (IMAYSSIAHMGWMTAIMAYNP), 201-221 (TLLNLXVYILLTTTXFMMLML), 240-260 (LATTILLIMLSLGGLPPLSGF), 274-294 (DSIIMPTIMAMAALLNLYFYM), and 326-346 (ISPLIILSTLXLPLSPMLTLL).

It belongs to the complex I subunit 2 family. Core subunit of respiratory chain NADH dehydrogenase (Complex I) which is composed of 45 different subunits. Interacts with TMEM242.

The protein resides in the mitochondrion inner membrane. It catalyses the reaction a ubiquinone + NADH + 5 H(+)(in) = a ubiquinol + NAD(+) + 4 H(+)(out). Core subunit of the mitochondrial membrane respiratory chain NADH dehydrogenase (Complex I) which catalyzes electron transfer from NADH through the respiratory chain, using ubiquinone as an electron acceptor. Essential for the catalytic activity and assembly of complex I. In Dobsonia minor (Lesser bare-backed fruit bat), this protein is NADH-ubiquinone oxidoreductase chain 2.